Consider the following 87-residue polypeptide: Ragulator complex protein LAMTOR4 homolog (87 aa).

The protein belongs to the LAMTOR4 family. In terms of assembly, part of the Ragulator complex.

The protein localises to the lysosome. Its function is as follows. Regulator of the TOR pathway, a signaling cascade that promotes cell growth in response to growth factors, energy levels, and amino acids. As part of the Ragulator complex, may activate the TOR signaling cascade in response to amino acids. This Dictyostelium discoideum (Social amoeba) protein is Ragulator complex protein LAMTOR4 homolog.